The primary structure comprises 454 residues: Death-associated protein kinase 3 (454 aa).

Residues 13-275 form the Protein kinase domain; that stretch reads YEMGEELGSG…IAQSLEHSWI (263 aa). ATP is bound by residues 19–27 and Lys-42; that span reads LGSGQFAIV. Ser-50 bears the Phosphoserine; by autocatalysis mark. Residues Glu-94 and Val-96 each contribute to the pyridone 6 site. Asp-139 (proton acceptor) is an active-site residue. An activation segment region spans residues 161 to 204; the sequence is DFGIAHKIEAGNEFKNIFGTPEFVAPEIVNYEPLGLEADMWSIG. Residues Thr-180 and Thr-225 each carry the phosphothreonine modification. Position 265 is a phosphothreonine; by autocatalysis and ROCK1 (Thr-265). Thr-299 is subject to Phosphothreonine; by autocatalysis, DAPK1 and ROCK1. At Thr-306 the chain carries Phosphothreonine; by autocatalysis. Ser-309 is subject to Phosphoserine; by DAPK1. Residue Ser-311 is modified to Phosphoserine; by autocatalysis and DAPK1. Phosphoserine; by DAPK1 is present on residues Ser-312, Ser-318, and Ser-326. The segment at 427–441 is leucine-zipper; sequence VASEMRFVQDLVRAL.

This sequence belongs to the protein kinase superfamily. CAMK Ser/Thr protein kinase family. DAP kinase subfamily. Homooligomer in its kinase-active form (homotrimers and homodimers are reported); monomeric in its kinase-inactive form. Homodimerization is required for activation segment autophosphorylation. Isoform 1 and isoform 2 interact with myosin and PPP1R12A; interaction of isoform 1 with PPP1R12A is inhibited by RhoA dominant negative form. Interacts with NLK, DAXX, STAT3, RHOD (GTP-bound form) and TCP10L. Interacts with PAWR; the interaction is reported conflictingly: according to PubMed:17953487 does not interact with PAWR. Interacts with ULK1; may be a substrate of ULK1. Interacts with LUZP1; the interaction is likely to occur throughout the cell cycle and reduces the LUZP1-mediated suppression of MYL9 phosphorylation. Mg(2+) is required as a cofactor. The phosphorylation status is critical for kinase activity, oligomerization and intracellular localization. Phosphorylation at Thr-180, Thr-225 and Thr-265 is essential for activity. The phosphorylated form is localized in the cytoplasm promoted by phosphorylation at Thr-299; nuclear translocation or retention is maximal when it is not phosphorylated. Phosphorylation increases the trimeric form, and its dephosphorylation favors a kinase-inactive monomeric form. Both isoform 1 and isoform 2 can undergo autophosphorylation. In terms of tissue distribution, widely expressed. Isoform 1 and isoform 2 are expressed in the bladder smooth muscle.

The protein localises to the nucleus. It localises to the PML body. It is found in the cytoplasm. Its subcellular location is the cytoskeleton. The protein resides in the microtubule organizing center. The protein localises to the centrosome. It localises to the chromosome. It is found in the centromere. Its subcellular location is the spindle. The protein resides in the midbody. It carries out the reaction L-seryl-[protein] + ATP = O-phospho-L-seryl-[protein] + ADP + H(+). It catalyses the reaction L-threonyl-[protein] + ATP = O-phospho-L-threonyl-[protein] + ADP + H(+). A sequential activation is proposed: autophosphorylation at consensus sites is leading to dimerization of the catalytic domain stabilized by phosphorylation at Ser-50 and activation segment exchange (producing an active confirmation of both kinase modules in trans) followed by phosphorylation at Thr-180 in the activation segment and at other regulatory sites. Phosphorylation at Thr-180, Thr-225 and Thr-265 is essential for activity. Oligomerization is required for full enzymatic activity. Inhibited by pyridone-6 (K00225), a potent, ATP-competitive inhibitor. In terms of biological role, serine/threonine kinase which is involved in the regulation of apoptosis, autophagy, transcription, translation and actin cytoskeleton reorganization. Involved in the regulation of smooth muscle contraction. Regulates both type I (caspase-dependent) apoptotic and type II (caspase-independent) autophagic cell deaths signal, depending on the cellular setting. Involved in regulation of starvation-induced autophagy. Regulates myosin phosphorylation in both smooth muscle and non-muscle cells. In smooth muscle, regulates myosin either directly by phosphorylating MYL12B and MYL9 or through inhibition of smooth muscle myosin phosphatase (SMPP1M) via phosphorylation of PPP1R12A; the inhibition of SMPP1M functions to enhance muscle responsiveness to Ca(2+) and promote a contractile state. Phosphorylates MYL12B in non-muscle cells leading to reorganization of actin cytoskeleton. Isoform 2 can phosphorylate myosin, PPP1R12A and MYL12B. Overexpression leads to condensation of actin stress fibers into thick bundles. Involved in actin filament focal adhesion dynamics. The function in both reorganization of actin cytoskeleton and focal adhesion dissolution is modulated by RhoD. Positively regulates canonical Wnt/beta-catenin signaling through interaction with NLK and TCF7L2. Phosphorylates RPL13A on 'Ser-77' upon interferon-gamma activation which is causing RPL13A release from the ribosome, RPL13A association with the GAIT complex and its subsequent involvement in transcript-selective translation inhibition. Enhances transcription from AR-responsive promoters in a hormone- and kinase-dependent manner. Involved in regulation of cell cycle progression and cell proliferation. May be a tumor suppressor. The polypeptide is Death-associated protein kinase 3 (DAPK3) (Homo sapiens (Human)).